The chain runs to 319 residues: Ribonucleoside-diphosphate reductase small chain (319 aa).

The interaction with R1 stretch occupies residues 313–319 (FSLDVDF).

The protein belongs to the ribonucleoside diphosphate reductase small chain family. In terms of assembly, interacts with RNR1/OPG080 subunit. Can interact with host RNR1 supunit. Fe cation is required as a cofactor.

It carries out the reaction a 2'-deoxyribonucleoside 5'-diphosphate + [thioredoxin]-disulfide + H2O = a ribonucleoside 5'-diphosphate + [thioredoxin]-dithiol. Functionally, ribonucleoside-diphosphate reductase holoenzyme provides the precursors necessary for viral DNA synthesis. Allows virus growth in non-dividing cells. Catalyzes the biosynthesis of deoxyribonucleotides from the corresponding ribonucleotides. The polypeptide is Ribonucleoside-diphosphate reductase small chain (OPG048) (Cynomys gunnisoni (Gunnison's prairie dog)).